Consider the following 230-residue polypeptide: Small ribosomal subunit protein uS3 (230 aa).

A KH type-2 domain is found at V39 to R107.

The protein belongs to the universal ribosomal protein uS3 family. As to quaternary structure, part of the 30S ribosomal subunit. Forms a tight complex with proteins S10 and S14.

In terms of biological role, binds the lower part of the 30S subunit head. Binds mRNA in the 70S ribosome, positioning it for translation. The sequence is that of Small ribosomal subunit protein uS3 from Alcanivorax borkumensis (strain ATCC 700651 / DSM 11573 / NCIMB 13689 / SK2).